We begin with the raw amino-acid sequence, 273 residues long: tRNA pseudouridine synthase B (273 aa).

Catalysis depends on aspartate 38, which acts as the Nucleophile.

The protein belongs to the pseudouridine synthase TruB family. Type 1 subfamily.

The catalysed reaction is uridine(55) in tRNA = pseudouridine(55) in tRNA. Responsible for synthesis of pseudouridine from uracil-55 in the psi GC loop of transfer RNAs. The protein is tRNA pseudouridine synthase B of Campylobacter curvus (strain 525.92).